The following is a 515-amino-acid chain: Probable NADPH:adrenodoxin oxidoreductase, mitochondrial (515 aa).

Residues Ala-52, Glu-73, Leu-81, and Ile-119 each coordinate FAD. NADP(+)-binding positions include Gln-191–Val-194, Arg-236–Arg-237, and Glu-248. Residues Trp-419 and Gly-426–Ile-428 each bind FAD. Gly-426 provides a ligand contact to NADP(+).

It belongs to the ferredoxin--NADP reductase type 1 family. It depends on FAD as a cofactor.

It localises to the mitochondrion inner membrane. The catalysed reaction is 2 reduced [adrenodoxin] + NADP(+) + H(+) = 2 oxidized [adrenodoxin] + NADPH. This is Probable NADPH:adrenodoxin oxidoreductase, mitochondrial (fdxr) from Dictyostelium discoideum (Social amoeba).